Consider the following 388-residue polypeptide: Probable proton-coupled zinc antiporter SLC30A3 (388 aa).

Residues 1–41 (MEPSLATGGSETTRLVSARDRSSAGGGLRLKSLFTEPSEPL) are disordered. The Cytoplasmic segment spans residues 1-75 (MEPSLATGGS…SPERVQARRQ (75 aa)). 2 positions are modified to phosphoserine: Ser63 and Ser66. A helical membrane pass occupies residues 76–96 (LYAACAVCFIFMAGEVVGGYL). The Lumenal portion of the chain corresponds to 97-105 (AHSLAIMTD). The helical transmembrane segment at 106-126 (AAHLLADIGSMLASLFSLWLS) threads the bilayer. Zn(2+) is bound by residues His108 and Asp112. Over 127 to 145 (TRPATRTMTFGWHRSETLG) the chain is Cytoplasmic. Residues 146–166 (ALASVVSLWIVTGILLYLAFL) traverse the membrane as a helical segment. Residues 167–177 (RLLHSDYHIEA) are Lumenal-facing. Residues 178–198 (GAMLLTASIAVCANLLMAFVL) form a helical membrane-spanning segment. At 199–235 (HQTGAPHSHGSTGAEYAPLEEGHGYPMSLGNTSVRAA) the chain is on the cytoplasmic side. The chain crosses the membrane as a helical span at residues 236-256 (FVHVLGDLLQSFGVLAASILI). Zn(2+)-binding residues include His238 and Asp242. Residues 257 to 263 (YFKPQYK) are Lumenal-facing. The helical transmembrane segment at 264-284 (VADPISTFLFSICALGSTAPT) threads the bilayer. Over 285–388 (LRDVLLVLME…CLRCQEPSQA (104 aa)) the chain is Cytoplasmic.

The protein belongs to the cation diffusion facilitator (CDF) transporter (TC 2.A.4) family. SLC30A subfamily. In terms of assembly, homodimer. Homodimerization is negligible compared to the human protein. It could explain the lower efficiency of zinc transport. Interacts with TMEM163. In terms of tissue distribution, expression is restricted to brain (at protein level). In the brain, most abundant in hippocampus and cerebral cortex. The mRNA is also detected in testis, expression being restricted to germ cells and highest in pachytene spermatocytes and round spermatids.

The protein localises to the cytoplasmic vesicle. It is found in the secretory vesicle. It localises to the synaptic vesicle membrane. Its subcellular location is the synapse. The protein resides in the synaptosome. The protein localises to the late endosome membrane. It is found in the lysosome membrane. The enzyme catalyses Zn(2+)(in) + 2 H(+)(out) = Zn(2+)(out) + 2 H(+)(in). Functionally, probable proton-coupled zinc ion antiporter mediating the import of zinc from cytoplasm into synaptic vesicles and participating to cellular zinc ion homeostasis in the brain. This Mus musculus (Mouse) protein is Probable proton-coupled zinc antiporter SLC30A3.